Consider the following 349-residue polypeptide: Hydroxymethylglutaryl-CoA synthase (349 aa).

(3S)-3-hydroxy-3-methylglutaryl-CoA-binding residues include D29 and A30. E81 (proton donor/acceptor) is an active-site residue. (3S)-3-hydroxy-3-methylglutaryl-CoA contacts are provided by C113 and T154. Catalysis depends on C113, which acts as the Acyl-thioester intermediate. R202 contributes to the CoA binding site. (3S)-3-hydroxy-3-methylglutaryl-CoA contacts are provided by T204 and H237. The Proton donor/acceptor role is filled by H237. K242 provides a ligand contact to CoA. (3S)-3-hydroxy-3-methylglutaryl-CoA is bound by residues K246, N269, and S299.

Belongs to the thiolase-like superfamily. Archaeal HMG-CoA synthase family. In terms of assembly, interacts with acetoacetyl-CoA thiolase that catalyzes the precedent step in the pathway and with a DUF35 protein. The acetoacetyl-CoA thiolase/HMG-CoA synthase complex channels the intermediate via a fused CoA-binding site, which allows for efficient coupling of the endergonic thiolase reaction with the exergonic HMGCS reaction.

The catalysed reaction is acetoacetyl-CoA + acetyl-CoA + H2O = (3S)-3-hydroxy-3-methylglutaryl-CoA + CoA + H(+). It functions in the pathway metabolic intermediate biosynthesis; (R)-mevalonate biosynthesis; (R)-mevalonate from acetyl-CoA: step 2/3. Catalyzes the condensation of acetyl-CoA with acetoacetyl-CoA to form 3-hydroxy-3-methylglutaryl-CoA (HMG-CoA). Functions in the mevalonate (MVA) pathway leading to isopentenyl diphosphate (IPP), a key precursor for the biosynthesis of isoprenoid compounds that are building blocks of archaeal membrane lipids. The sequence is that of Hydroxymethylglutaryl-CoA synthase from Methanosarcina barkeri (strain Fusaro / DSM 804).